The chain runs to 551 residues: Glucose-6-phosphate isomerase (551 aa).

Glu-349 serves as the catalytic Proton donor. Active-site residues include His-378 and Lys-480.

Belongs to the GPI family.

It localises to the cytoplasm. The catalysed reaction is alpha-D-glucose 6-phosphate = beta-D-fructose 6-phosphate. Its pathway is carbohydrate biosynthesis; gluconeogenesis. It participates in carbohydrate degradation; glycolysis; D-glyceraldehyde 3-phosphate and glycerone phosphate from D-glucose: step 2/4. In terms of biological role, catalyzes the reversible isomerization of glucose-6-phosphate to fructose-6-phosphate. This Prochlorococcus marinus (strain MIT 9313) protein is Glucose-6-phosphate isomerase.